Here is a 279-residue protein sequence, read N- to C-terminus: Probable endonuclease 4 (279 aa).

The Zn(2+) site is built by histidine 69, histidine 109, glutamate 145, aspartate 179, histidine 182, histidine 216, aspartate 229, histidine 231, and glutamate 261.

It belongs to the AP endonuclease 2 family. It depends on Zn(2+) as a cofactor.

The enzyme catalyses Endonucleolytic cleavage to 5'-phosphooligonucleotide end-products.. Its function is as follows. Endonuclease IV plays a role in DNA repair. It cleaves phosphodiester bonds at apurinic or apyrimidinic (AP) sites, generating a 3'-hydroxyl group and a 5'-terminal sugar phosphate. The sequence is that of Probable endonuclease 4 from Chlorobium luteolum (strain DSM 273 / BCRC 81028 / 2530) (Pelodictyon luteolum).